The following is a 338-amino-acid chain: Glycerol-3-phosphate dehydrogenase [NAD(P)+] (338 aa).

NADPH contacts are provided by Ser-13, Trp-14, and Lys-108. Sn-glycerol 3-phosphate contacts are provided by Lys-108, Gly-139, and Ser-141. Ala-143 contributes to the NADPH binding site. Sn-glycerol 3-phosphate contacts are provided by Lys-194, Asp-247, Ser-257, Arg-258, and Asn-259. Lys-194 serves as the catalytic Proton acceptor. Arg-258 contacts NADPH. NADPH-binding residues include Val-282 and Glu-284.

Belongs to the NAD-dependent glycerol-3-phosphate dehydrogenase family.

It localises to the cytoplasm. It catalyses the reaction sn-glycerol 3-phosphate + NAD(+) = dihydroxyacetone phosphate + NADH + H(+). The catalysed reaction is sn-glycerol 3-phosphate + NADP(+) = dihydroxyacetone phosphate + NADPH + H(+). Its pathway is membrane lipid metabolism; glycerophospholipid metabolism. Functionally, catalyzes the reduction of the glycolytic intermediate dihydroxyacetone phosphate (DHAP) to sn-glycerol 3-phosphate (G3P), the key precursor for phospholipid synthesis. This Listeria monocytogenes serotype 4a (strain HCC23) protein is Glycerol-3-phosphate dehydrogenase [NAD(P)+].